A 408-amino-acid polypeptide reads, in one-letter code: MAPPLPILIIGAGISGLTTARLLTNSGIPNIVFEASSPDRRQGFAISLREWGYATLLSALGDLPLRSLTRGVAPDREIGGSGWIDQAVWDNGTAKKLFVPDANSSTKEQIVRANRNALRRWIADCGEEELDVRYGHRLKRVEGSLGDVQVEFENGAFYRGLMVVAADGVNSTVRSQVLADVQPEIVPAVLYHGEFQLPRADFDRLFRPHTGESNILAGVGDGFNTPFAVCNMTKTHVHMDWSYSRPAWGSGENDPLYRPNLASEEAKRIPPALVEELASRDLAEPWSLFLNGEAIQHHRVFHWAVRCVSVTQEDMQRAVGRGIAFVGDSWHAMPIFGGEGGNHALADGVELAAAVAAGVAGDLGVAIGNYYDRAWKRSQDAVRRSKQRFYALHRPMAQWRELSQKKPV.

The N-terminal stretch at Met1–Ala20 is a signal peptide. FAD contacts are provided by Glu34 and Ala45. N-linked (GlcNAc...) asparagine glycans are attached at residues Asn91 and Asn103. FAD is bound at residue Arg119. 2 N-linked (GlcNAc...) asparagine glycosylation sites follow: Asn170 and Asn231. Positions 328 and 341 each coordinate FAD.

This sequence belongs to the paxM FAD-dependent monooxygenase family. Requires FAD as cofactor.

The protein operates within secondary metabolite biosynthesis. Functionally, FAD-dependent monooxygenase; part of the gene cluster that mediates the biosynthesis of neosartoricin, a prenylated anthracenone that exhibits T-cell antiproliferative activity, suggestive of a physiological role as an immunosuppressive agent. The non-reducing polyketide synthase nscA probably synthesizes and cyclizes the decaketide backbone. The hydrolase nscB then mediates the product release through hydrolysis followed by spontaneous decarboxylation. The prenyltransferase nscD catalyzes the addition of the dimethylallyl group to the aromatic C5. The FAD-dependent monooxygenase nscC is then responsible for the stereospecific hydroxylation at C2. There is no gene encoding O-acetyltransferase in the nsc gene cluster; thus, the last step of 2-O-acetylation leading to neosartoricin may be catalyzed by an unidentified O-acetyltransferase. The chain is FAD-dependent monooxygenase nscC from Neosartorya fischeri (strain ATCC 1020 / DSM 3700 / CBS 544.65 / FGSC A1164 / JCM 1740 / NRRL 181 / WB 181) (Aspergillus fischerianus).